We begin with the raw amino-acid sequence, 583 residues long: Eukaryotic translation initiation factor 3 subunit D (583 aa).

Positions 116-150 are disordered; the sequence is GRAQRGAGQRGGRAGFQRVGAGRGQGDRFYDNRGG. Over residues 140 to 149 the composition is skewed to basic and acidic residues; that stretch reads QGDRFYDNRG. Positions 298–312 are RNA gate; sequence SLDLVTVNENAIDAP. Residues 561–583 are disordered; that stretch reads NTFEEDEEAAAEEEEQKAEEDEE. Over residues 563 to 583 the composition is skewed to acidic residues; the sequence is FEEDEEAAAEEEEQKAEEDEE.

It belongs to the eIF-3 subunit D family. In terms of assembly, component of the eukaryotic translation initiation factor 3 (eIF-3) complex.

It is found in the cytoplasm. MRNA cap-binding component of the eukaryotic translation initiation factor 3 (eIF-3) complex, which is involved in protein synthesis of a specialized repertoire of mRNAs and, together with other initiation factors, stimulates binding of mRNA and methionyl-tRNAi to the 40S ribosome. The eIF-3 complex specifically targets and initiates translation of a subset of mRNAs involved in cell proliferation. In the eIF-3 complex, eif3d specifically recognizes and binds the 7-methylguanosine cap of a subset of mRNAs. The polypeptide is Eukaryotic translation initiation factor 3 subunit D (Aspergillus oryzae (strain ATCC 42149 / RIB 40) (Yellow koji mold)).